Here is a 140-residue protein sequence, read N- to C-terminus: Methylglyoxal synthase (140 aa).

Positions 1 to 140 constitute an MGS-like domain; it reads MKIALIAHDR…HEGDRRPLAF (140 aa). Residues His-8, Lys-12, 34 to 37, and 54 to 55 contribute to the substrate site; these read TGTT and SG. Asp-60 functions as the Proton donor/acceptor in the catalytic mechanism. Residue His-87 participates in substrate binding.

The protein belongs to the methylglyoxal synthase family.

It carries out the reaction dihydroxyacetone phosphate = methylglyoxal + phosphate. Catalyzes the formation of methylglyoxal from dihydroxyacetone phosphate. This is Methylglyoxal synthase from Enterococcus faecalis (strain ATCC 700802 / V583).